A 1106-amino-acid polypeptide reads, in one-letter code: Translation initiation factor IF-2 (1106 aa).

Composition is skewed to low complexity over residues 57-72 (GKAA…PDAG) and 81-97 (APST…SAPP). 2 disordered regions span residues 57–434 (GKAA…QKVH) and 466–497 (PSKP…RQRR). Pro residues-rich tracts occupy residues 113-123 (PAKPAPSAPPS) and 138-148 (PAKPAPSAPPS). Residues 172–199 (AKPVAKPASAPAPARPAQPLRPQASNRP) show a composition bias toward low complexity. Composition is skewed to pro residues over residues 200 to 214 (PQQP…PAAK) and 223 to 235 (TAPP…PGAP). Composition is skewed to low complexity over residues 251–292 (PNQQ…QQRR), 319–329 (PQGRQGGAPSR), and 395–405 (YRPAAAPGMAG). The segment covering 408-422 (RRPDWDDSARLDALR) has biased composition (basic and acidic residues). Positions 482–497 (ALRRRKKETTRQRQRR) are enriched in basic residues. Residues 598 to 771 (RRPPVVTVMG…LLVTEVEDLK (174 aa)) form the tr-type G domain. The G1 stretch occupies residues 607–614 (GHVDHGKT). 607–614 (GHVDHGKT) contacts GTP. Residues 632–636 (GITQH) form a G2 region. Residues 657 to 660 (DTPG) are G3. GTP contacts are provided by residues 657 to 661 (DTPGH) and 711 to 714 (NKVD). The tract at residues 711-714 (NKVD) is G4. A G5 region spans residues 747 to 749 (SAL).

The protein belongs to the TRAFAC class translation factor GTPase superfamily. Classic translation factor GTPase family. IF-2 subfamily.

The protein localises to the cytoplasm. One of the essential components for the initiation of protein synthesis. Protects formylmethionyl-tRNA from spontaneous hydrolysis and promotes its binding to the 30S ribosomal subunits. Also involved in the hydrolysis of GTP during the formation of the 70S ribosomal complex. In Synechococcus sp. (strain RCC307), this protein is Translation initiation factor IF-2.